The chain runs to 348 residues: Holliday junction branch migration complex subunit RuvB (348 aa).

A large ATPase domain (RuvB-L) region spans residues 4–186 (TDRIISANTV…FGIIQRLEFY (183 aa)). ATP is bound by residues Ile-25, Arg-26, Gly-67, Lys-70, Thr-71, Thr-72, 133–135 (EDY), Arg-176, Tyr-186, and Arg-223. Thr-71 contacts Mg(2+). A small ATPAse domain (RuvB-S) region spans residues 187–257 (SVDDLAKIVY…IADKALTMLK (71 aa)). The tract at residues 260–348 (PVGFDHMDHK…SSDQQQNLSL (89 aa)) is head domain (RuvB-H). 2 residues coordinate DNA: Arg-315 and Arg-320.

The protein belongs to the RuvB family. Homohexamer. Forms an RuvA(8)-RuvB(12)-Holliday junction (HJ) complex. HJ DNA is sandwiched between 2 RuvA tetramers; dsDNA enters through RuvA and exits via RuvB. An RuvB hexamer assembles on each DNA strand where it exits the tetramer. Each RuvB hexamer is contacted by two RuvA subunits (via domain III) on 2 adjacent RuvB subunits; this complex drives branch migration. In the full resolvosome a probable DNA-RuvA(4)-RuvB(12)-RuvC(2) complex forms which resolves the HJ.

The protein resides in the cytoplasm. It carries out the reaction ATP + H2O = ADP + phosphate + H(+). Functionally, the RuvA-RuvB-RuvC complex processes Holliday junction (HJ) DNA during genetic recombination and DNA repair, while the RuvA-RuvB complex plays an important role in the rescue of blocked DNA replication forks via replication fork reversal (RFR). RuvA specifically binds to HJ cruciform DNA, conferring on it an open structure. The RuvB hexamer acts as an ATP-dependent pump, pulling dsDNA into and through the RuvAB complex. RuvB forms 2 homohexamers on either side of HJ DNA bound by 1 or 2 RuvA tetramers; 4 subunits per hexamer contact DNA at a time. Coordinated motions by a converter formed by DNA-disengaged RuvB subunits stimulates ATP hydrolysis and nucleotide exchange. Immobilization of the converter enables RuvB to convert the ATP-contained energy into a lever motion, pulling 2 nucleotides of DNA out of the RuvA tetramer per ATP hydrolyzed, thus driving DNA branch migration. The RuvB motors rotate together with the DNA substrate, which together with the progressing nucleotide cycle form the mechanistic basis for DNA recombination by continuous HJ branch migration. Branch migration allows RuvC to scan DNA until it finds its consensus sequence, where it cleaves and resolves cruciform DNA. In Francisella philomiragia subsp. philomiragia (strain ATCC 25017 / CCUG 19701 / FSC 153 / O#319-036), this protein is Holliday junction branch migration complex subunit RuvB.